A 329-amino-acid chain; its full sequence is Biotin synthase (329 aa).

Residues 48 to 278 (FVGDKVYLCS…SKKISVCGGR (231 aa)) enclose the Radical SAM core domain. Cys66, Cys70, and Cys73 together coordinate [4Fe-4S] cluster. Residues Ser143 and Cys203 each coordinate [2Fe-2S] cluster.

Belongs to the radical SAM superfamily. Biotin synthase family. Homodimer. It depends on [4Fe-4S] cluster as a cofactor. [2Fe-2S] cluster serves as cofactor.

It catalyses the reaction (4R,5S)-dethiobiotin + (sulfur carrier)-SH + 2 reduced [2Fe-2S]-[ferredoxin] + 2 S-adenosyl-L-methionine = (sulfur carrier)-H + biotin + 2 5'-deoxyadenosine + 2 L-methionine + 2 oxidized [2Fe-2S]-[ferredoxin]. Its pathway is cofactor biosynthesis; biotin biosynthesis; biotin from 7,8-diaminononanoate: step 2/2. Its function is as follows. Catalyzes the conversion of dethiobiotin (DTB) to biotin by the insertion of a sulfur atom into dethiobiotin via a radical-based mechanism. The sequence is that of Biotin synthase from Geotalea uraniireducens (strain Rf4) (Geobacter uraniireducens).